A 268-amino-acid chain; its full sequence is 4-hydroxy-tetrahydrodipicolinate reductase (268 aa).

Residues 9 to 14 (GAAGRM), 99 to 101 (GTT), and 123 to 126 (ASNF) each bind NAD(+). Residue H156 is the Proton donor/acceptor of the active site. Residue H157 coordinates (S)-2,3,4,5-tetrahydrodipicolinate. K160 acts as the Proton donor in catalysis. 166–167 (GT) contacts (S)-2,3,4,5-tetrahydrodipicolinate.

The protein belongs to the DapB family.

The protein resides in the cytoplasm. The enzyme catalyses (S)-2,3,4,5-tetrahydrodipicolinate + NAD(+) + H2O = (2S,4S)-4-hydroxy-2,3,4,5-tetrahydrodipicolinate + NADH + H(+). It carries out the reaction (S)-2,3,4,5-tetrahydrodipicolinate + NADP(+) + H2O = (2S,4S)-4-hydroxy-2,3,4,5-tetrahydrodipicolinate + NADPH + H(+). Its pathway is amino-acid biosynthesis; L-lysine biosynthesis via DAP pathway; (S)-tetrahydrodipicolinate from L-aspartate: step 4/4. Its function is as follows. Catalyzes the conversion of 4-hydroxy-tetrahydrodipicolinate (HTPA) to tetrahydrodipicolinate. This chain is 4-hydroxy-tetrahydrodipicolinate reductase, found in Saccharophagus degradans (strain 2-40 / ATCC 43961 / DSM 17024).